A 118-amino-acid chain; its full sequence is Small ribosomal subunit protein uS13 (118 aa).

The tract at residues Arg-93–Lys-118 is disordered.

It belongs to the universal ribosomal protein uS13 family. Part of the 30S ribosomal subunit. Forms a loose heterodimer with protein S19. Forms two bridges to the 50S subunit in the 70S ribosome.

Located at the top of the head of the 30S subunit, it contacts several helices of the 16S rRNA. In the 70S ribosome it contacts the 23S rRNA (bridge B1a) and protein L5 of the 50S subunit (bridge B1b), connecting the 2 subunits; these bridges are implicated in subunit movement. Contacts the tRNAs in the A and P-sites. The polypeptide is Small ribosomal subunit protein uS13 (Pseudomonas paraeruginosa (strain DSM 24068 / PA7) (Pseudomonas aeruginosa (strain PA7))).